The sequence spans 337 residues: Glyceraldehyde-3-phosphate dehydrogenase (337 aa).

NAD(+)-binding positions include 12 to 13 (RI), aspartate 34, and lysine 79. Residues 150–152 (SCT), threonine 181, 210–211 (TG), and arginine 233 contribute to the D-glyceraldehyde 3-phosphate site. Cysteine 151 acts as the Nucleophile in catalysis. Residue asparagine 315 participates in NAD(+) binding.

Belongs to the glyceraldehyde-3-phosphate dehydrogenase family. As to quaternary structure, homotetramer.

The protein localises to the cytoplasm. The enzyme catalyses D-glyceraldehyde 3-phosphate + phosphate + NAD(+) = (2R)-3-phospho-glyceroyl phosphate + NADH + H(+). It functions in the pathway carbohydrate degradation; glycolysis; pyruvate from D-glyceraldehyde 3-phosphate: step 1/5. The polypeptide is Glyceraldehyde-3-phosphate dehydrogenase (GPD1) (Phaeosphaeria nodorum (strain SN15 / ATCC MYA-4574 / FGSC 10173) (Glume blotch fungus)).